The chain runs to 335 residues: tRNA N6-adenosine threonylcarbamoyltransferase (335 aa).

Fe cation is bound by residues His111 and His115. Residues 133 to 137 (IISGG), Asp166, Gly179, Asp183, and Asn268 contribute to the substrate site. Asp296 provides a ligand contact to Fe cation.

Belongs to the KAE1 / TsaD family. Fe(2+) serves as cofactor.

The protein localises to the cytoplasm. It carries out the reaction L-threonylcarbamoyladenylate + adenosine(37) in tRNA = N(6)-L-threonylcarbamoyladenosine(37) in tRNA + AMP + H(+). Its function is as follows. Required for the formation of a threonylcarbamoyl group on adenosine at position 37 (t(6)A37) in tRNAs that read codons beginning with adenine. Is involved in the transfer of the threonylcarbamoyl moiety of threonylcarbamoyl-AMP (TC-AMP) to the N6 group of A37, together with TsaE and TsaB. TsaD likely plays a direct catalytic role in this reaction. In Aquifex aeolicus (strain VF5), this protein is tRNA N6-adenosine threonylcarbamoyltransferase.